We begin with the raw amino-acid sequence, 545 residues long: CTP synthase (545 aa).

Positions 1-266 (MATNYIFVTG…DDFVCERFRL (266 aa)) are amidoligase domain. A CTP-binding site is contributed by Ser-14. Ser-14 lines the UTP pocket. Residues 15–20 (SLGKGI) and Asp-72 each bind ATP. Residues Asp-72 and Glu-140 each contribute to the Mg(2+) site. CTP contacts are provided by residues 147–149 (DIE), 187–192 (KTKPTQ), and Lys-223. UTP contacts are provided by residues 187 to 192 (KTKPTQ) and Lys-223. An ATP-binding site is contributed by 239 to 241 (KDV). The Glutamine amidotransferase type-1 domain occupies 291-542 (TIGMVGKYTE…VKAAYENHKK (252 aa)). L-glutamine is bound at residue Gly-352. Cys-379 acts as the Nucleophile; for glutamine hydrolysis in catalysis. L-glutamine contacts are provided by residues 380-383 (LGMQ), Glu-403, and Arg-470. Residues His-515 and Glu-517 contribute to the active site.

The protein belongs to the CTP synthase family. In terms of assembly, homotetramer.

It catalyses the reaction UTP + L-glutamine + ATP + H2O = CTP + L-glutamate + ADP + phosphate + 2 H(+). The enzyme catalyses L-glutamine + H2O = L-glutamate + NH4(+). It carries out the reaction UTP + NH4(+) + ATP = CTP + ADP + phosphate + 2 H(+). It participates in pyrimidine metabolism; CTP biosynthesis via de novo pathway; CTP from UDP: step 2/2. Allosterically activated by GTP, when glutamine is the substrate; GTP has no effect on the reaction when ammonia is the substrate. The allosteric effector GTP functions by stabilizing the protein conformation that binds the tetrahedral intermediate(s) formed during glutamine hydrolysis. Inhibited by the product CTP, via allosteric rather than competitive inhibition. In terms of biological role, catalyzes the ATP-dependent amination of UTP to CTP with either L-glutamine or ammonia as the source of nitrogen. Regulates intracellular CTP levels through interactions with the four ribonucleotide triphosphates. The polypeptide is CTP synthase (Haemophilus influenzae (strain ATCC 51907 / DSM 11121 / KW20 / Rd)).